The primary structure comprises 160 residues: Ribosomal RNA large subunit methyltransferase H (160 aa).

S-adenosyl-L-methionine contacts are provided by residues Leu-76, Gly-108, and 127–132 (LGKMTW).

The protein belongs to the RNA methyltransferase RlmH family. Homodimer.

The protein localises to the cytoplasm. It catalyses the reaction pseudouridine(1915) in 23S rRNA + S-adenosyl-L-methionine = N(3)-methylpseudouridine(1915) in 23S rRNA + S-adenosyl-L-homocysteine + H(+). Functionally, specifically methylates the pseudouridine at position 1915 (m3Psi1915) in 23S rRNA. The polypeptide is Ribosomal RNA large subunit methyltransferase H (Rhizobium etli (strain ATCC 51251 / DSM 11541 / JCM 21823 / NBRC 15573 / CFN 42)).